Here is a 766-residue protein sequence, read N- to C-terminus: Phosphoribosylformylglycinamidine synthase subunit PurL (766 aa).

Residue His-46 is part of the active site. Residues Tyr-49 and Lys-88 each coordinate ATP. Glu-90 contacts Mg(2+). Substrate contacts are provided by residues 91–94 (SHNH) and Arg-113. Residue His-92 is the Proton acceptor of the active site. Asp-114 serves as a coordination point for Mg(2+). Residue Gln-237 coordinates substrate. Asp-265 serves as a coordination point for Mg(2+). 309–311 (ESQ) lines the substrate pocket. 2 residues coordinate ATP: Asp-520 and Gly-557. Asn-558 is a Mg(2+) binding site. Substrate is bound at residue Ser-560.

It belongs to the FGAMS family. In terms of assembly, monomer. Part of the FGAM synthase complex composed of 1 PurL, 1 PurQ and 2 PurS subunits.

Its subcellular location is the cytoplasm. The enzyme catalyses N(2)-formyl-N(1)-(5-phospho-beta-D-ribosyl)glycinamide + L-glutamine + ATP + H2O = 2-formamido-N(1)-(5-O-phospho-beta-D-ribosyl)acetamidine + L-glutamate + ADP + phosphate + H(+). The protein operates within purine metabolism; IMP biosynthesis via de novo pathway; 5-amino-1-(5-phospho-D-ribosyl)imidazole from N(2)-formyl-N(1)-(5-phospho-D-ribosyl)glycinamide: step 1/2. In terms of biological role, part of the phosphoribosylformylglycinamidine synthase complex involved in the purines biosynthetic pathway. Catalyzes the ATP-dependent conversion of formylglycinamide ribonucleotide (FGAR) and glutamine to yield formylglycinamidine ribonucleotide (FGAM) and glutamate. The FGAM synthase complex is composed of three subunits. PurQ produces an ammonia molecule by converting glutamine to glutamate. PurL transfers the ammonia molecule to FGAR to form FGAM in an ATP-dependent manner. PurS interacts with PurQ and PurL and is thought to assist in the transfer of the ammonia molecule from PurQ to PurL. The sequence is that of Phosphoribosylformylglycinamidine synthase subunit PurL from Synechococcus sp. (strain JA-3-3Ab) (Cyanobacteria bacterium Yellowstone A-Prime).